A 417-amino-acid polypeptide reads, in one-letter code: Phosphoglycerate kinase 1 (417 aa).

At Ser-2 the chain carries N-acetylserine. Phosphoserine occurs at positions 2 and 4. The residue at position 6 (Lys-6) is an N6-succinyllysine. Lys-11 bears the N6-acetyllysine mark. (2R)-3-phosphoglycerate is bound by residues Val-23, Asp-24, Phe-25, Asn-26, Gln-38, and Arg-39. The tract at residues 38 to 43 (QRIKAA) is mitochondrial targeting region exposed following cis-trans isomerization by PIN1 and recognized by the TOM complex for mitochondrial translocation of the protein. At Lys-48 the chain carries N6-acetyllysine; alternate. At Lys-48 the chain carries N6-succinyllysine; alternate. (2R)-3-phosphoglycerate is bound by residues Ser-62, His-63, Gly-65, and Arg-66. N6-acetyllysine is present on Lys-75. Residue Tyr-76 is modified to Phosphotyrosine. Lys-86 and Lys-91 each carry N6-acetyllysine. Residue Lys-97 is modified to N6-acetyllysine; alternate. Lys-97 carries the N6-(2-hydroxyisobutyryl)lysine; alternate modification. (2R)-3-phosphoglycerate-binding residues include Leu-122 and Arg-123. N6-acetyllysine; alternate is present on Lys-131. Lys-131 carries the N6-malonyllysine; alternate modification. Position 146 is an N6-acetyllysine (Lys-146). (2R)-3-phosphoglycerate contacts are provided by His-170 and Arg-171. Position 191 is an N6-succinyllysine (Lys-191). Tyr-196 carries the phosphotyrosine modification. Lys-199 is subject to N6-acetyllysine. Ser-203 bears the Phosphoserine mark. An ADP-binding site is contributed by Gly-214. Gly-214 contacts CDP. The AMP site is built by Ala-215 and Lys-216. Residue Ala-215 participates in ATP binding. Mg(2+) is bound at residue Ala-215. Residue Lys-216 is modified to N6-(2-hydroxyisobutyryl)lysine. Mg(2+)-binding residues include Ala-218 and Asp-219. Residue Asp-219 coordinates CDP. Lys-220 contributes to the AMP binding site. Lys-220 contacts ATP. Position 220 is an N6-(2-hydroxyisobutyryl)lysine (Lys-220). Gly-238 lines the ADP pocket. Residue Gly-238 coordinates CDP. Residue Gly-239 participates in AMP binding. An ATP-binding site is contributed by Gly-239. Lys-267 and Lys-291 each carry N6-acetyllysine. Residue Gly-313 participates in AMP binding. Gly-313 contributes to the ATP binding site. N6-(2-hydroxyisobutyryl)lysine is present on Lys-323. CDP is bound by residues Gly-338, Val-340, and Phe-343. An ADP-binding site is contributed by Phe-343. Glu-344 is an AMP binding site. Glu-344 contacts ATP. Position 354 is a phosphoserine (Ser-354). Lys-361 bears the N6-acetyllysine mark. Asp-375 and Thr-376 together coordinate ATP. Mg(2+) is bound at residue Asp-375.

This sequence belongs to the phosphoglycerate kinase family. In terms of assembly, monomer. Interacts with kinase MAPK1/ERK2; the interaction is direct, occurs under hypoxic conditions, and promotes its interaction with PIN1. Interacts with peptidyl-prolyl cis-trans isomerase PIN1; the interaction is direct, occurs under hypoxic conditions, and targets the protein to the mitochondrion by promoting interactions with the TOM complex. Interacts with mitochondrial circRNA mcPGK1 (via its 2nd stem-loop); the interaction is direct and targets the protein to the mitochondrion by promoting interactions with the TOM complex. Interacts with pyruvate dehydrogenase kinase PDK1; the interaction is direct, occurs under hypoxic conditions and leads to PDK1-mediated inhibition of pyruvate dehydrogenase complex activity. It depends on Mg(2+) as a cofactor. Phosphorylated at Ser-203 by MAPK1/ERK2 under hypoxic conditions, which promotes its mitochondrial targeting.

It localises to the cytoplasm. The protein resides in the cytosol. The protein localises to the mitochondrion matrix. The enzyme catalyses (2R)-3-phosphoglycerate + ATP = (2R)-3-phospho-glyceroyl phosphate + ADP. It catalyses the reaction L-seryl-[protein] + ATP = O-phospho-L-seryl-[protein] + ADP + H(+). The protein operates within carbohydrate degradation; glycolysis; pyruvate from D-glyceraldehyde 3-phosphate: step 2/5. In terms of biological role, catalyzes one of the two ATP producing reactions in the glycolytic pathway via the reversible conversion of 1,3-diphosphoglycerate to 3-phosphoglycerate. Both L- and D- forms of purine and pyrimidine nucleotides can be used as substrates, but the activity is much lower on pyrimidines. In addition to its role as a glycolytic enzyme, it seems that PGK-1 acts as a polymerase alpha cofactor protein (primer recognition protein). Acts as a protein kinase when localized to the mitochondrion where it phosphorylates pyruvate dehydrogenase kinase PDK1 to inhibit pyruvate dehydrogenase complex activity and suppress the formation of acetyl-coenzyme A from pyruvate, and consequently inhibit oxidative phosphorylation and promote glycolysis. May play a role in sperm motility. The sequence is that of Phosphoglycerate kinase 1 (Pgk1) from Rattus norvegicus (Rat).